Reading from the N-terminus, the 25-residue chain is Omega-conotoxin MVIIB (25 aa).

3 disulfide bridges follow: Cys1–Cys16, Cys8–Cys20, and Cys15–Cys25. Cys25 is modified (cysteine amide).

Belongs to the conotoxin O1 superfamily. In terms of tissue distribution, expressed by the venom duct.

It localises to the secreted. Omega-conotoxins act at presynaptic membranes, they bind and block voltage-gated calcium channels (Cav). This Conus magus (Magical cone) protein is Omega-conotoxin MVIIB.